We begin with the raw amino-acid sequence, 481 residues long: Arf-GAP domain and FG repeat-containing protein 2 (481 aa).

The 127-residue stretch at 27–153 (EVWCRRVREL…WYVPPDQVKG (127 aa)) folds into the Arf-GAP domain. The segment at 47 to 70 (CFECAQRGVTYVDITVGSFVCTTC) adopts a C4-type zinc-finger fold. 3 disordered regions span residues 150 to 220 (QVKG…SVKK), 271 to 309 (SSVFGSLPPAGQASFQAQPTPAGSSQGTPFGATPLAPAS), and 431 to 481 (QQNG…NPFL). Residues 157–166 (TKGSASTPVQ) are compositionally biased toward polar residues. Lysine 173 is modified (N6-acetyllysine). Polar residues-rich tracts occupy residues 188–210 (VAASTSSQPVSQSHARTSQARST), 283–298 (ASFQAQPTPAGSSQGT), and 454–481 (AGISTNPFMTGPSSSPFASKPPTTNPFL).

Interacts with EPS15R.

The protein is Arf-GAP domain and FG repeat-containing protein 2 (AGFG2) of Homo sapiens (Human).